The following is a 435-amino-acid chain: NADH-quinone oxidoreductase subunit D (435 aa).

This sequence belongs to the complex I 49 kDa subunit family. NDH-1 is composed of 14 different subunits. Subunits NuoB, C, D, E, F, and G constitute the peripheral sector of the complex.

The protein localises to the cell inner membrane. It carries out the reaction a quinone + NADH + 5 H(+)(in) = a quinol + NAD(+) + 4 H(+)(out). Functionally, NDH-1 shuttles electrons from NADH, via FMN and iron-sulfur (Fe-S) centers, to quinones in the respiratory chain. The immediate electron acceptor for the enzyme in this species is believed to be ubiquinone. Couples the redox reaction to proton translocation (for every two electrons transferred, four hydrogen ions are translocated across the cytoplasmic membrane), and thus conserves the redox energy in a proton gradient. This chain is NADH-quinone oxidoreductase subunit D, found in Xanthomonas axonopodis pv. citri (strain 306).